The following is a 197-amino-acid chain: ATP-dependent Clp protease proteolytic subunit 2 (197 aa).

The Nucleophile role is filled by Ser101. His126 is a catalytic residue.

The protein belongs to the peptidase S14 family. Fourteen ClpP subunits assemble into 2 heptameric rings which stack back to back to give a disk-like structure with a central cavity, resembling the structure of eukaryotic proteasomes.

It localises to the cytoplasm. It carries out the reaction Hydrolysis of proteins to small peptides in the presence of ATP and magnesium. alpha-casein is the usual test substrate. In the absence of ATP, only oligopeptides shorter than five residues are hydrolyzed (such as succinyl-Leu-Tyr-|-NHMec, and Leu-Tyr-Leu-|-Tyr-Trp, in which cleavage of the -Tyr-|-Leu- and -Tyr-|-Trp bonds also occurs).. Its function is as follows. Cleaves peptides in various proteins in a process that requires ATP hydrolysis. Has a chymotrypsin-like activity. Plays a major role in the degradation of misfolded proteins. This chain is ATP-dependent Clp protease proteolytic subunit 2, found in Trichormus variabilis (strain ATCC 29413 / PCC 7937) (Anabaena variabilis).